A 502-amino-acid polypeptide reads, in one-letter code: UDP-N-acetylmuramoylalanine--D-glutamate ligase (502 aa).

129–135 serves as a coordination point for ATP; sequence GTNGKTT.

Belongs to the MurCDEF family.

The protein localises to the cytoplasm. It catalyses the reaction UDP-N-acetyl-alpha-D-muramoyl-L-alanine + D-glutamate + ATP = UDP-N-acetyl-alpha-D-muramoyl-L-alanyl-D-glutamate + ADP + phosphate + H(+). The protein operates within cell wall biogenesis; peptidoglycan biosynthesis. Cell wall formation. Catalyzes the addition of glutamate to the nucleotide precursor UDP-N-acetylmuramoyl-L-alanine (UMA). This Burkholderia ambifaria (strain MC40-6) protein is UDP-N-acetylmuramoylalanine--D-glutamate ligase.